The chain runs to 40 residues: Serine proteinase-like BMK-CBP (40 aa).

In terms of domain architecture, Peptidase S1 spans 1 to 40 (IFGGTFAKNGEYPWMVVIDLPEFACGGVLISKKFVLTAAH). H40 acts as the Charge relay system in catalysis.

The protein belongs to the peptidase S1 family. In terms of tissue distribution, expressed by the venom gland.

Its subcellular location is the secreted. In terms of biological role, binds in a dose-dependent manner to the breast cancer cell line MCF-7. This chain is Serine proteinase-like BMK-CBP, found in Olivierus martensii (Manchurian scorpion).